The chain runs to 299 residues: NADH-cytochrome b5 reductase 2 (299 aa).

The helical transmembrane segment at 13–35 (SFKVLAPFAAAVGSVGIAYQYST) threads the bilayer. The 105-residue stretch at 50 to 154 (DEWIDLKLAK…KGPVVKWKWE (105 aa)) folds into the FAD-binding FR-type domain. 157 to 192 (QYKSIALIGGGTGITPLYQLMHEITKNPEDKTKVNL) lines the FAD pocket.

The protein belongs to the flavoprotein pyridine nucleotide cytochrome reductase family. It depends on FAD as a cofactor.

The protein localises to the mitochondrion outer membrane. The catalysed reaction is 2 Fe(III)-[cytochrome b5] + NADH = 2 Fe(II)-[cytochrome b5] + NAD(+) + H(+). Functionally, may mediate the reduction of outer membrane cytochrome b5. In Debaryomyces hansenii (strain ATCC 36239 / CBS 767 / BCRC 21394 / JCM 1990 / NBRC 0083 / IGC 2968) (Yeast), this protein is NADH-cytochrome b5 reductase 2 (MCR1).